The sequence spans 2678 residues: Mediator of RNA polymerase II transcription subunit 13 (2678 aa).

Disordered stretches follow at residues 1-52 (MMGT…GYNS), 140-285 (SKKP…QPIS), 495-524 (NSNN…QQQQ), 553-615 (QQQQ…NNNI), 852-993 (SPSS…QQQQ), 1070-1253 (TSHY…KPFL), 1278-1394 (LPHN…QDES), 1462-1502 (SPFS…NNHH), 1806-1838 (FSGS…SMDD), 2075-2105 (QNQN…QTQT), 2225-2307 (SSSS…QEQK), and 2656-2678 (KLTP…SNNT). Composition is skewed to low complexity over residues 15–48 (SGSN…PTTS), 144–162 (INNS…TDSS), and 169–186 (NSPS…NSNN). Polar residues predominate over residues 187–206 (VTKDSPPNATNKMSTSPKSL). A compositionally biased stretch (low complexity) spans 207-276 (SPTISNNNNN…SPPTVASVTS (70 aa)). 2 stretches are compositionally biased toward low complexity: residues 553 to 573 (QQQQ…DNNN) and 587 to 615 (SSSS…NNNI). Polar residues predominate over residues 855 to 872 (SPLTQHPSSPHSPFNNVN). Residues 901–916 (KKRHGKSQKKGRSSKR) show a composition bias toward basic residues. Over residues 922–950 (SNNNNNNNTTTTSTITATTTTTTPTAATT) the composition is skewed to low complexity. Composition is skewed to polar residues over residues 966-979 (NIQE…LTTV) and 1079-1090 (PTQNGSQKNNQR). A compositionally biased stretch (low complexity) spans 1109 to 1150 (TTTTTTTTTTTPTPNPTTTTTQPQTQPQQQSQQQQQPQQTNP). Residues 1151–1195 (ILPTNSNLITNQKPQQYQPPLQDPFQSIDSQQPKSIQSPTLTNQP) are compositionally biased toward polar residues. A compositionally biased stretch (low complexity) spans 1201–1211 (PTLTNQPLQQY). The segment covering 1281 to 1306 (NTEQSPSNDDLSNPNHLHHGTPTSAI) has biased composition (polar residues). Over residues 1312–1321 (SSSSSGNNMI) the composition is skewed to low complexity. Positions 1322–1343 (GSGGIVGSGGGNTNVSGSGGGM) are enriched in gly residues. Basic residues predominate over residues 1359 to 1371 (PHHHHHHHHHHHP). Low complexity predominate over residues 1475–1497 (TTTNNNNNHNNNNNNNHPNNHHQ). Polar residues predominate over residues 1806-1819 (FSGSSGLNNSNDRN). Polar residues predominate over residues 2658 to 2678 (TPNSKQSPSPINSPHLNSNNT).

This sequence belongs to the Mediator complex subunit 13 family. In terms of assembly, component of the Mediator complex.

Its subcellular location is the nucleus. Functionally, component of the Mediator complex, a coactivator involved in the regulated transcription of nearly all RNA polymerase II-dependent genes. Mediator functions as a bridge to convey information from gene-specific regulatory proteins to the basal RNA polymerase II transcription machinery. Mediator is recruited to promoters by direct interactions with regulatory proteins and serves as a scaffold for the assembly of a functional preinitiation complex with RNA polymerase II and the general transcription factors. Required for the starvation-induced activation of the ACA (adenylyl cyclase) expression pathway at the growth/differentiation transition. This chain is Mediator of RNA polymerase II transcription subunit 13 (amiB), found in Dictyostelium discoideum (Social amoeba).